Consider the following 401-residue polypeptide: Nuclear hormone receptor family member nhr-65 (401 aa).

Residues 10 to 79 (PERCKVCGDT…AGMSSENFQF (70 aa)) constitute a DNA-binding region (nuclear receptor). NR C4-type zinc fingers lie at residues 13–33 (CKVC…CRAC) and 49–67 (CENH…LQRC). Residues 132-398 (KAEKLIEFGS…FSHPEFIQDA (267 aa)) enclose the NR LBD domain.

Belongs to the nuclear hormone receptor family.

It localises to the nucleus. Its function is as follows. Orphan nuclear receptor. The polypeptide is Nuclear hormone receptor family member nhr-65 (nhr-65) (Caenorhabditis elegans).